Consider the following 276-residue polypeptide: CASP-like protein 4A3 (276 aa).

The segment covering 1–13 (MPSMSPSSISTEK) has biased composition (polar residues). A disordered region spans residues 1-76 (MPSMSPSSIS…PVKIEETPSP (76 aa)). The Cytoplasmic portion of the chain corresponds to 1–126 (MPSMSPSSIS…RRSRREEIVK (126 aa)). Residues 43-72 (SLDHSSDSEKEDEKRRPESRRNKNPVKIEE) are compositionally biased toward basic and acidic residues. Residues 127–147 (FVALGFRLSEVVLALISFSIM) form a helical membrane-spanning segment. Topologically, residues 148–167 (AADKTKGWSGDSFDRYKEYR) are extracellular. A helical membrane pass occupies residues 168-188 (FCLSVNVVAFIYASFQACDLA). Residues 189–205 (YHLVKEKHLISHHLRPL) lie on the Cytoplasmic side of the membrane. Residues 206 to 226 (FEFIIDQVLAYLLMCASTAAV) traverse the membrane as a helical segment. Over 227–244 (TRVDDWVSNWGKDDFTEM) the chain is Extracellular. Residues 245–265 (ASASIAMSFLTFLAFAFSSLI) traverse the membrane as a helical segment. Residues 266-276 (SGYNLFNQDSL) are Cytoplasmic-facing.

The protein belongs to the Casparian strip membrane proteins (CASP) family. As to quaternary structure, homodimer and heterodimers.

It localises to the cell membrane. This Arabidopsis lyrata subsp. lyrata (Lyre-leaved rock-cress) protein is CASP-like protein 4A3.